The sequence spans 103 residues: MATMKIKKGDLVKVIAGKDINNEGKVIAVNAKNNTLLVEGINMVTKHTKPSMSNQQGGIVHQEAPIDASNVMLIHDGKPTRVGFKMDGDKKVRFAKSTGKVID.

Belongs to the universal ribosomal protein uL24 family. In terms of assembly, part of the 50S ribosomal subunit.

In terms of biological role, one of two assembly initiator proteins, it binds directly to the 5'-end of the 23S rRNA, where it nucleates assembly of the 50S subunit. Functionally, one of the proteins that surrounds the polypeptide exit tunnel on the outside of the subunit. In Agathobacter rectalis (strain ATCC 33656 / DSM 3377 / JCM 17463 / KCTC 5835 / VPI 0990) (Eubacterium rectale), this protein is Large ribosomal subunit protein uL24.